The sequence spans 60 residues: Homeobox protein engrailed-like (60 aa).

Positions 1-41 (GEQLCRLRAEFQASRYLTEERRTALARELRLNEAQIKIWFQ) form a DNA-binding region, homeobox.

The protein belongs to the engrailed homeobox family.

It is found in the nucleus. This chain is Homeobox protein engrailed-like, found in Lampetra planeri (Brook lamprey).